The sequence spans 439 residues: Chitinase-like protein Idgf1 (439 aa).

Positions 1 to 20 are cleaved as a signal peptide; it reads MRFQLFYILGLLSVTSLTQA. A GH18 domain is found at 22 to 439; sequence NNLVCYYDST…IVRSIKYFMG (418 aa). The cysteines at positions 26 and 53 are disulfide-linked. 3 N-linked (GlcNAc...) asparagine glycosylation sites follow: asparagine 122, asparagine 218, and asparagine 346. A disulfide bridge connects residues cysteine 340 and cysteine 423.

It belongs to the glycosyl hydrolase 18 family. IDGF subfamily. In terms of processing, glycosylated.

It is found in the secreted. Its function is as follows. Cooperates with insulin-like peptides to stimulate the proliferation, polarization and motility of imaginal disk cells. May act by stabilizing the binding of insulin-like peptides to its receptor through a simultaneous interaction with both molecules to form a multiprotein signaling complex. This is Chitinase-like protein Idgf1 (Idgf1) from Drosophila simulans (Fruit fly).